The primary structure comprises 150 residues: Large ribosomal subunit protein uL15 (150 aa).

Positions 1–13 (MADNDAIKVHDLR) are enriched in basic and acidic residues. Residues 1-44 (MADNDAIKVHDLRPAPGAKTAKTRVGRGEASKGKTAGRGTKGTK) are disordered.

This sequence belongs to the universal ribosomal protein uL15 family. As to quaternary structure, part of the 50S ribosomal subunit.

Binds to the 23S rRNA. This Micrococcus luteus (strain ATCC 4698 / DSM 20030 / JCM 1464 / CCM 169 / CCUG 5858 / IAM 1056 / NBRC 3333 / NCIMB 9278 / NCTC 2665 / VKM Ac-2230) (Micrococcus lysodeikticus) protein is Large ribosomal subunit protein uL15.